A 734-amino-acid polypeptide reads, in one-letter code: DNA-binding protein RFX2 (734 aa).

Residues 1 to 23 (MQRSEGGSETPSTVALRTSTSAQ) show a composition bias toward polar residues. Residues 1-31 (MQRSEGGSETPSTVALRTSTSAQAPVVQPVP) are disordered. The RFX-type winged-helix DNA-binding region spans 204–279 (HLQWLLDNYE…YHYYGIRLKP (76 aa)). The tract at residues 694-722 (DTSFSDDMTSDGDMSRMSERSLTEPAVKR) is disordered. A compositionally biased stretch (basic and acidic residues) spans 706 to 722 (DMSRMSERSLTEPAVKR).

This sequence belongs to the RFX family. As to quaternary structure, homodimer. Heterodimer; heterodimerizes with other rfx proteins.

The protein localises to the nucleus. It is found in the cytoplasm. Functionally, transcription factor that acts as a key regulator of ciliogenesis. Specifically regulates expression of genes required for cilium assembly and function. Recognizes and binds the X-box, a regulatory motif with DNA sequence 5'-GTNRCC(0-3N)RGYAAC-3' present on promoters. The polypeptide is DNA-binding protein RFX2 (rfx2) (Danio rerio (Zebrafish)).